Consider the following 125-residue polypeptide: Putative superoxide reductase (125 aa).

6 residues coordinate Fe cation: Glu12, His14, His40, His46, Cys110, and His113.

The protein belongs to the desulfoferrodoxin family. It depends on Fe cation as a cofactor.

The enzyme catalyses reduced [rubredoxin] + superoxide + 2 H(+) = oxidized [rubredoxin] + H2O2. Its function is as follows. Uses electrons from reduced NADP, by way of rubredoxin and an oxidoreductase, to catalyze the reduction of superoxide to hydrogen peroxide. The chain is Putative superoxide reductase from Archaeoglobus fulgidus (strain ATCC 49558 / DSM 4304 / JCM 9628 / NBRC 100126 / VC-16).